The chain runs to 229 residues: CRISPR pre-crRNA endoribonuclease Cas5d (229 aa).

This sequence belongs to the CRISPR-associated protein Cas5 family. Subtype I-C/Dvulg subfamily. It depends on Does not require a metal cofactor. as a cofactor.

In terms of biological role, CRISPR (clustered regularly interspaced short palindromic repeat) is an adaptive immune system that provides protection against mobile genetic elements (viruses, transposable elements and conjugative plasmids). CRISPR clusters contain spacers, sequences complementary to antecedent mobile elements, and target invading nucleic acids. CRISPR clusters are transcribed and processed into CRISPR RNA (crRNA). This protein is a sequence-specific endonuclease that cleaves pre-crRNA into mature crRNA, possibly by an intramolecular attack of the 2'-hydroxyl group of G26 on the scissile phosphodiester, cutting the precursor 3' to G26 residue yielding 5'-hydroxyl and 2' and/or 3' ends lacking a hydroxyl group (perhaps a 2'/3' cyclic phosphodiester). Requires between 4 and 8 nt downstream of the cleavage site for both binding and cleavage of pre-crRNA. Substitution with dG at this position abolishes cleavage but not RNA binding. Does not cleave pre-crRNA associated with the M.succiniciproducens strain MBEL55E Cas5 protein (AC Q65TW5) CRISPR locus. The chain is CRISPR pre-crRNA endoribonuclease Cas5d from Thermus thermophilus (strain ATCC BAA-163 / DSM 7039 / HB27).